The following is a 540-amino-acid chain: FAD-binding monooxygenase lolF2 (540 aa).

FAD-binding positions include 43-46 and 55-58; these read VWRE and DSLF. NADP(+) contacts are provided by residues 53–55, 182–188, and 205–206; these read AVD, TGPSGVQ, and QS.

This sequence belongs to the FAD-binding monooxygenase family. FAD is required as a cofactor.

It functions in the pathway alkaloid biosynthesis. Functionally, FAD-binding monooxygenase; part of the gene cluster that mediates the biosynthesis of loline alkaloids, potent insecticidal agents composed of a pyrrolizidine ring system and an uncommon ether bridge linking carbons 2 and 7. Lolines are structurally differentiated by the various modifications of the L-amino group and include norloline, loline, N-methylloline, N-acetylloline, N-acetylnorloline, and N-formylloline. The first committed step is the condensation of O-acetyl-L-homoserine (derived from L-aspartic acid) and L-proline, probably catalyzed by the gamma-type pyridoxal 5'-phosphate(PLP)-dependent enzyme lolC, to give the diamino diacid, NACPP. Ensuing cyclization, decarboxylation, and acetylation steps yield 1-exo-acetamidopyrrolizidine (AcAP). LolO is required for installation of the ether bridge upon the pathway intermediate, 1-exo-acetamidopyrrolizidine (AcAP). In sequential 2-oxoglutarate- and O(2)-consuming steps, lolO removes hydrogens from C2 and C7 of AcAP to form both carbon-oxygen bonds in N-acetylnorloline (NANL), the precursor to all other lolines. The enzymes lolD, lolE, lolF and lolT have also been proposed to be involved in the ether-bridge installation. Further processing of the exocyclic moiety of NANL by fungal N-acetamidase (LolN), methyltransferase (LolM), and cytochrome P450 (LolP) enzymes, with occasional involvement of a plant acetyltransferase, generates the other known lolines. LolN transforms NANL to norlonine which is monomethylated and dimethylated to respectively lonine and N-methyllonine (NML) by lolM. LolP catalyzes hydroxylation of the methyl group in N-methylloline (NML) and further oxygenation to N-formylloline (NFL). A plant acetyltransferase is responsible for the acetylation of loline to form N-acetylloline (NAL). LolA might interact with aspartate kinase to prevent feedback inhibition of its activity by these end products and thereby promote production of l-homoserine from l-aspartate. This Epichloe uncinata (Endophyte fungus) protein is FAD-binding monooxygenase lolF2.